The following is a 440-amino-acid chain: uncharacterized protein (440 aa).

The signal sequence occupies residues 1–19 (MKKLLLAASIIYFASVSLA).

This is an uncharacterized protein from Rickettsia typhi (strain ATCC VR-144 / Wilmington).